A 294-amino-acid polypeptide reads, in one-letter code: NAD kinase (294 aa).

The active-site Proton acceptor is aspartate 72. Residues 72–73, 146–147, arginine 157, arginine 174, aspartate 176, 187–192, and glutamine 247 each bind NAD(+); these read DG, ND, and TAYALS.

It belongs to the NAD kinase family. A divalent metal cation serves as cofactor.

Its subcellular location is the cytoplasm. The enzyme catalyses NAD(+) + ATP = ADP + NADP(+) + H(+). Its function is as follows. Involved in the regulation of the intracellular balance of NAD and NADP, and is a key enzyme in the biosynthesis of NADP. Catalyzes specifically the phosphorylation on 2'-hydroxyl of the adenosine moiety of NAD to yield NADP. The polypeptide is NAD kinase (Saccharophagus degradans (strain 2-40 / ATCC 43961 / DSM 17024)).